A 225-amino-acid chain; its full sequence is MAPVKGPLTPIQVENLQFPASITSPATAKSYFLGGAGERGLTIEGKFIKFTGLGVYLEDKTVDSLATKWKGKSSQELLDSLDFYRDIISSPSEKLIRGSKLRPLSGVEYSRKVMENCVAHMKSTGTYGEAEAAAIGKFAEAFRNLDFPPGSSVFYRQSPDGELGLSFSPDDTLPEKEAVVIENKALSEAVLETMIGEHAVSPDLKRCLAERLPAVLNQGLLLSGN.

Thr51, Asn116, and Thr193 together coordinate substrate.

The protein belongs to the chalcone isomerase family.

The enzyme catalyses a chalcone = a flavanone.. It participates in secondary metabolite biosynthesis; flavonoid biosynthesis. In terms of biological role, catalyzes the intramolecular cyclization of bicyclic chalcones into tricyclic (S)-flavanones. Responsible for the isomerization of 4,2',4',6'-tetrahydroxychalcone (also termed chalcone) into naringenin. This chain is Chalcone--flavanone isomerase 3 (CHI3), found in Lotus japonicus (Lotus corniculatus var. japonicus).